A 595-amino-acid polypeptide reads, in one-letter code: Parathyroid hormone/parathyroid hormone-related peptide receptor (595 aa).

The N-terminal stretch at methionine 1–alanine 28 is a signal peptide. The Extracellular segment spans residues aspartate 29 to glycine 188. 3 disulfide bridges follow: cysteine 48–cysteine 117, cysteine 108–cysteine 148, and cysteine 131–cysteine 170. The interval aspartate 66–histidine 103 is disordered. N-linked (GlcNAc...) asparagine glycosylation is found at asparagine 151, asparagine 161, asparagine 166, and asparagine 176. The helical transmembrane segment at methionine 189 to leucine 209 threads the bilayer. The Cytoplasmic portion of the chain corresponds to alanine 210–histidine 223. Residues methionine 224–leucine 244 form a helical membrane-spanning segment. Topologically, residues tyrosine 245–asparagine 294 are extracellular. The helical transmembrane segment at tyrosine 295–serine 315 threads the bilayer. Residues glutamate 316–lysine 318 lie on the Cytoplasmic side of the membrane. A helical transmembrane segment spans residues tyrosine 319–valine 339. Topologically, residues serine 340–tryptophan 360 are extracellular. Residues isoleucine 361 to valine 381 traverse the membrane as a helical segment. The Cytoplasmic segment spans residues arginine 382–lysine 404. The helical transmembrane segment at leucine 405–alanine 425 threads the bilayer. The Extracellular portion of the chain corresponds to threonine 426–glutamine 439. Residues methionine 440–phenylalanine 460 traverse the membrane as a helical segment. Topologically, residues cysteine 461–methionine 595 are cytoplasmic. The Important for interaction with G proteins motif lies at tryptophan 473–tryptophan 476. Residues threonine 528 to methionine 595 form a disordered region. Low complexity predominate over residues alanine 547 to alanine 559. The residue at position 553 (threonine 553) is a Phosphothreonine.

Belongs to the G-protein coupled receptor 2 family. As to quaternary structure, homodimer in the absence of bound ligand. Peptide hormone binding leads to dissociation of the homodimer. Post-translationally, N-glycosylated. As to expression, high levels in the kidney, with much lower levels in aorta, heart, lung, prostate, testis, and skeletal muscle.

Its subcellular location is the cell membrane. G-protein-coupled receptor for parathyroid hormone (PTH) and for parathyroid hormone-related peptide (PTHLH). Ligand binding causes a conformation change that triggers signaling via guanine nucleotide-binding proteins (G proteins) and modulates the activity of downstream effectors, such as adenylate cyclase (cAMP). PTH1R is coupled to G(s) G alpha proteins and mediates activation of adenylate cyclase activity. PTHLH dissociates from PTH1R more rapidly than PTH; as consequence, the cAMP response induced by PTHLH decays faster than the response induced by PTH. The sequence is that of Parathyroid hormone/parathyroid hormone-related peptide receptor (PTH1R) from Canis lupus familiaris (Dog).